A 260-amino-acid polypeptide reads, in one-letter code: MNSIAPRLEIEQFICRSDNYGVLIHDPQSALTASIDAPDAAAIEAALKRRGWTLDFIFTTHHHLDHVEGNEALKAKYGVSIIGPKAEETKIPGIDRTVKDGDEFTFGLFRVKVIATPGHTAGEVSYYLPDAKAVFTGDTLFALGCGRLFEGTPLTMFQSLQKLVALPGDTAVYCGHEYTESNARFALTIDPANSALKERAAEIARLRAADRMTLPSSIALEMATNPFLRWHDAGIRSRLGLQDAPDEAVFAEIRKRKDMF.

Residues H61, H63, D65, H66, H119, D138, and H176 each coordinate Zn(2+).

The protein belongs to the metallo-beta-lactamase superfamily. Glyoxalase II family. Monomer. The cofactor is Zn(2+).

It catalyses the reaction an S-(2-hydroxyacyl)glutathione + H2O = a 2-hydroxy carboxylate + glutathione + H(+). The protein operates within secondary metabolite metabolism; methylglyoxal degradation; (R)-lactate from methylglyoxal: step 2/2. In terms of biological role, thiolesterase that catalyzes the hydrolysis of S-D-lactoyl-glutathione to form glutathione and D-lactic acid. This Brucella anthropi (strain ATCC 49188 / DSM 6882 / CCUG 24695 / JCM 21032 / LMG 3331 / NBRC 15819 / NCTC 12168 / Alc 37) (Ochrobactrum anthropi) protein is Hydroxyacylglutathione hydrolase.